A 106-amino-acid chain; its full sequence is ATP-dependent Clp protease adapter protein ClpS (106 aa).

The protein belongs to the ClpS family. In terms of assembly, binds to the N-terminal domain of the chaperone ClpA.

In terms of biological role, involved in the modulation of the specificity of the ClpAP-mediated ATP-dependent protein degradation. This is ATP-dependent Clp protease adapter protein ClpS from Vibrio campbellii (strain ATCC BAA-1116).